The primary structure comprises 114 residues: MKPTRQSSIHCADCARAALRLPRNSGRALIWIYRHTLSPLVGFNCRHLPTCSVYGDEAIERFGLWGGGWMTLARLLRCQPWGTSGIDNVPATKPPGASWYRPWRYGRWRGVNAP.

This sequence belongs to the UPF0161 family.

The protein resides in the cell inner membrane. Could be involved in insertion of integral membrane proteins into the membrane. The polypeptide is Putative membrane protein insertion efficiency factor (Nitrobacter hamburgensis (strain DSM 10229 / NCIMB 13809 / X14)).